Here is a 301-residue protein sequence, read N- to C-terminus: Probable porphobilinogen deaminase (301 aa).

Residue cysteine 241 is modified to S-(dipyrrolylmethanemethyl)cysteine.

This sequence belongs to the HMBS family. It depends on dipyrromethane as a cofactor.

The catalysed reaction is 4 porphobilinogen + H2O = hydroxymethylbilane + 4 NH4(+). Its pathway is porphyrin-containing compound metabolism; protoporphyrin-IX biosynthesis; coproporphyrinogen-III from 5-aminolevulinate: step 2/4. In terms of biological role, tetrapolymerization of the monopyrrole PBG into the hydroxymethylbilane pre-uroporphyrinogen in several discrete steps. In Pyrobaculum islandicum (strain DSM 4184 / JCM 9189 / GEO3), this protein is Probable porphobilinogen deaminase.